The chain runs to 24 residues: Cytochrome c oxidase subunit 5A-2, mitochondrial (24 aa).

This sequence belongs to the cytochrome c oxidase subunit 5A family. Component of the cytochrome c oxidase (complex IV, CIV), a multisubunit enzyme composed of 14 subunits. The complex is composed of a catalytic core of 3 subunits MT-CO1, MT-CO2 and MT-CO3, encoded in the mitochondrial DNA, and 11 supernumerary subunits COX4I, COX5A, COX5B, COX6A, COX6B, COX6C, COX7A, COX7B, COX7C, COX8 and NDUFA4, which are encoded in the nuclear genome. The complex exists as a monomer or a dimer and forms supercomplexes (SCs) in the inner mitochondrial membrane with NADH-ubiquinone oxidoreductase (complex I, CI) and ubiquinol-cytochrome c oxidoreductase (cytochrome b-c1 complex, complex III, CIII), resulting in different assemblies (supercomplex SCI(1)III(2)IV(1) and megacomplex MCI(2)III(2)IV(2)).

The protein localises to the mitochondrion inner membrane. Its pathway is energy metabolism; oxidative phosphorylation. In terms of biological role, component of the cytochrome c oxidase, the last enzyme in the mitochondrial electron transport chain which drives oxidative phosphorylation. The respiratory chain contains 3 multisubunit complexes succinate dehydrogenase (complex II, CII), ubiquinol-cytochrome c oxidoreductase (cytochrome b-c1 complex, complex III, CIII) and cytochrome c oxidase (complex IV, CIV), that cooperate to transfer electrons derived from NADH and succinate to molecular oxygen, creating an electrochemical gradient over the inner membrane that drives transmembrane transport and the ATP synthase. Cytochrome c oxidase is the component of the respiratory chain that catalyzes the reduction of oxygen to water. Electrons originating from reduced cytochrome c in the intermembrane space (IMS) are transferred via the dinuclear copper A center (CU(A)) of subunit 2 and heme A of subunit 1 to the active site in subunit 1, a binuclear center (BNC) formed by heme A3 and copper B (CU(B)). The BNC reduces molecular oxygen to 2 water molecules using 4 electrons from cytochrome c in the IMS and 4 protons from the mitochondrial matrix. This chain is Cytochrome c oxidase subunit 5A-2, mitochondrial, found in Thunnus obesus (Bigeye tuna).